A 277-amino-acid polypeptide reads, in one-letter code: Large ribosomal subunit protein uL2 (277 aa).

Residues 225 to 277 (AMNPVDHPHGGGEGKTSGGRHPVSPWGRPEGKTRRANKPSDRFIIRRKSRKRR) form a disordered region. Residues 253–268 (PEGKTRRANKPSDRFI) are compositionally biased toward basic and acidic residues.

The protein belongs to the universal ribosomal protein uL2 family. In terms of assembly, part of the 50S ribosomal subunit. Forms a bridge to the 30S subunit in the 70S ribosome.

Its function is as follows. One of the primary rRNA binding proteins. Required for association of the 30S and 50S subunits to form the 70S ribosome, for tRNA binding and peptide bond formation. It has been suggested to have peptidyltransferase activity; this is somewhat controversial. Makes several contacts with the 16S rRNA in the 70S ribosome. This chain is Large ribosomal subunit protein uL2, found in Tropheryma whipplei (strain TW08/27) (Whipple's bacillus).